Reading from the N-terminus, the 682-residue chain is Tail-specific protease (682 aa).

Residues 1-22 (MNMFFRLTALAGLLAIAGQTFA) form the signal peptide. Residues 238-322 (NTEMSLSLEG…SKVRLEILPA (85 aa)) enclose the PDZ domain. Active-site charge relay system residues include serine 452, aspartate 463, and lysine 477. A compositionally biased stretch (basic and acidic residues) spans 635–650 (GKPELKKLDDLPKDYQ). The disordered stretch occupies residues 635-654 (GKPELKKLDDLPKDYQEPDP).

The protein belongs to the peptidase S41A family.

The protein resides in the cell inner membrane. The catalysed reaction is The enzyme shows specific recognition of a C-terminal tripeptide, Xaa-Yaa-Zaa, in which Xaa is preferably Ala or Leu, Yaa is preferably Ala or Tyr, and Zaa is preferably Ala, but then cleaves at a variable distance from the C-terminus. A typical cleavage is -Ala-Ala-|-Arg-Ala-Ala-Lys-Glu-Asn-Tyr-Ala-Leu-Ala-Ala.. Involved in the cleavage of a C-terminal peptide of 11 residues from the precursor form of penicillin-binding protein 3 (PBP3). May be involved in protection of the bacterium from thermal and osmotic stresses. The chain is Tail-specific protease (prc) from Escherichia coli (strain K12).